Reading from the N-terminus, the 498-residue chain is Cysteine--tRNA ligase (498 aa).

Residue cysteine 44 coordinates Zn(2+). A 'HIGH' region motif is present at residues 46 to 56 (PTVYSDAHLGH). Cysteine 235, histidine 260, and glutamate 264 together coordinate Zn(2+). The 'KMSKS' region motif lies at 291-295 (KMSKS). Residue lysine 294 participates in ATP binding.

This sequence belongs to the class-I aminoacyl-tRNA synthetase family. As to quaternary structure, monomer. Zn(2+) serves as cofactor.

It is found in the cytoplasm. The enzyme catalyses tRNA(Cys) + L-cysteine + ATP = L-cysteinyl-tRNA(Cys) + AMP + diphosphate. The chain is Cysteine--tRNA ligase (cysS) from Deinococcus radiodurans (strain ATCC 13939 / DSM 20539 / JCM 16871 / CCUG 27074 / LMG 4051 / NBRC 15346 / NCIMB 9279 / VKM B-1422 / R1).